A 470-amino-acid polypeptide reads, in one-letter code: MMTAKAVDKIPVTLSGFMHQLPDSLYPVEDLAASSVTIFPNGELGGPFDQMNGVAGDGMINIDMTGEKRPLDLPYPSSFAPISAPRNQTFTYMGKFSIDPQYPGASCYPEGIINIVSAGILQGVTPPASTTASSSVTSASPNPLATGPLGVCTMSQTQPELDHLYSPPPPPPPYSGCTGDLYQDPSAFLSPPSTTSTSSLAYQPPPSYPSPKPAMDPGLIPMIPDYPGFFPSPCQRDPHGAAGPDRKPFPCPLDSLRVPPPLTPLSTIRNFTLGGPGAGVTGPGASGGGEGPRLPGSGSAAVTATPYNPHHLPLRPILRPRKYPNRPSKTPVHERPYPCPAEGCDRRFSRSDELTRHIRIHTGHKPFQCRICMRNFSRSDHLTTHIRTHTGEKPFACDYCGRKFARSDERKRHTKIHLRQKERKSSAPSAPPSAQSSASGPGGSQAGGSLCGNSAIGGPLASCTSRTRTP.

The span at 126–141 (PPASTTASSSVTSASP) shows a compositional bias: low complexity. Disordered regions lie at residues 126–153 (PPASTTASSSVTSASPNPLATGPLGVCT), 159–178 (PELDHLYSPPPPPPPYSGCT), and 185–210 (PSAFLSPPSTTSTSSLAYQPPPSYPS). Positions 190-202 (SPPSTTSTSSLAY) are enriched in low complexity. An N6-acetyllysine; by EP300 modification is found at Lys247. Residues 275-291 (GPGAGVTGPGASGGGEG) are compositionally biased toward gly residues. Residues 275-345 (GPGAGVTGPG…PYPCPAEGCD (71 aa)) are disordered. 3 C2H2-type zinc fingers span residues 337–361 (YPCPAEGCDRRFSRSDELTRHIRIH), 367–389 (FQCRICMRNFSRSDHLTTHIRTH), and 395–417 (FACDYCGRKFARSDERKRHTKIH). A disordered region spans residues 408–470 (DERKRHTKIH…ASCTSRTRTP (63 aa)). A compositionally biased stretch (basic residues) spans 412 to 422 (RHTKIHLRQKE). Over residues 426–439 (SAPSAPPSAQSSAS) the composition is skewed to low complexity. Residues 440 to 450 (GPGGSQAGGSL) show a composition bias toward gly residues.

It belongs to the EGR C2H2-type zinc-finger protein family. In terms of assembly, interacts with HCFC1. Interacts with WWP2. Interacts with UBC9. Interacts with CITED1. Interacts (via phosphorylated form) with SFN. Post-translationally, ubiquitinated by WWP2 leading to proteasomal degradation. In terms of processing, acetylated at Lys-247. May be deacetylated by HDAC6, HDAC10 or SIRT1. As to expression, expressed mainly in the thymus.

The protein resides in the nucleus. The protein operates within protein modification; protein sumoylation. Its function is as follows. Sequence-specific DNA-binding transcription factor. Plays a role in hindbrain segmentation by regulating the expression of a subset of homeobox containing genes and in Schwann cell myelination by regulating the expression of genes involved in the formation and maintenance of myelin. Binds to two EGR2-consensus sites EGR2A (5'-CTGTAGGAG-3') and EGR2B (5'-ATGTAGGTG-3') in the HOXB3 enhancer and promotes HOXB3 transcriptional activation. Binds to specific DNA sites located in the promoter region of HOXA4, HOXB2 and ERBB2. Regulates hindbrain segmentation by controlling the expression of Hox genes, such as HOXA4, HOXB3 and HOXB2, and thereby specifying odd and even rhombomeres. Promotes the expression of HOXB3 in the rhombomere r5 and of HOXB3 in r3 and r5 in the hindbrain. Regulates myelination in the peripheral nervous system after birth, possibly by regulating the expression of myelin proteins, such as MPZ, and by promoting the differentiation of Schwann cells. Involved in the development of the jaw openener musculature, probably by playing a role in its innervation through trigeminal motor neurons. May play a role in adipogenesis, possibly by regulating the expression of CEBPB. In terms of biological role, E3 SUMO-protein ligase helping SUMO1 conjugation to its coregulators NAB1 and NAB2, whose sumoylation down-regulates EGR2 transcriptional activity. This Mus musculus (Mouse) protein is E3 SUMO-protein ligase EGR2 (Egr2).